A 459-amino-acid polypeptide reads, in one-letter code: Cysteine--tRNA ligase (459 aa).

A Zn(2+)-binding site is contributed by Cys28. A 'HIGH' region motif is present at residues 30–40; sequence VTIYDLCHIGH. Zn(2+)-binding residues include Cys209, His234, and Glu238. Positions 266–270 match the 'KMSKS' region motif; that stretch reads KMSKS. Lys269 is an ATP binding site.

It belongs to the class-I aminoacyl-tRNA synthetase family. As to quaternary structure, monomer. Zn(2+) is required as a cofactor.

It localises to the cytoplasm. The enzyme catalyses tRNA(Cys) + L-cysteine + ATP = L-cysteinyl-tRNA(Cys) + AMP + diphosphate. The polypeptide is Cysteine--tRNA ligase (Shewanella baltica (strain OS223)).